The chain runs to 422 residues: ATP-dependent Clp protease ATP-binding subunit ClpX 1 (422 aa).

The ClpX-type ZB domain maps to aspartate 4–glutamate 57. Zn(2+) contacts are provided by cysteine 16, cysteine 19, cysteine 38, and cysteine 41. Position 120 to 127 (proline 120 to leucine 127) interacts with ATP.

It belongs to the ClpX chaperone family. In terms of assembly, component of the ClpX-ClpP complex. Forms a hexameric ring that, in the presence of ATP, binds to fourteen ClpP subunits assembled into a disk-like structure with a central cavity, resembling the structure of eukaryotic proteasomes.

Functionally, ATP-dependent specificity component of the Clp protease. It directs the protease to specific substrates. Can perform chaperone functions in the absence of ClpP. The sequence is that of ATP-dependent Clp protease ATP-binding subunit ClpX 1 from Methylococcus capsulatus (strain ATCC 33009 / NCIMB 11132 / Bath).